A 715-amino-acid polypeptide reads, in one-letter code: MIYEGKAITVKALESGIVELKFDLKGESVNKFNRLTLNELRQAVEAIQADASVKGVIVSSGKDVFIVGADITEFVDNFKLPEAELVAGNLEANRIFNAFEDLEVPTVAAINGIALGGGLEMCLAADYRVMSNSAKIGLPEVKLGIYPGFGGTVRLPRLIGSDNAIEWIAAGKENRAEDALKVGAVDAVVAPELLLAGALDLIKRAISGELDYKAKRQPKLEKLKLNAIEQMMAFETAKGFVAGQAGPNYPAPVEAIKSIQKAANFGRDKALEVEAAGFAKLAKTSVAESLIGLFLNDQELKRKAKAHDEIAHDVKQAAVLGAGIMGGGIAYQSAVKGTPILMKDIREEAIQLGLNEASKLLGNRVEKGRLTPAKMAEALNAIRPTLSYGDFANVDIVVEAVVENPKVKQAVLAEVEGQVKDDAILASNTSTISINLLAKALKRPENFVGMHFFNPVHMMPLVEVIRGEKSSEVAVATTVAYAKKMGKNPIVVNDCPGFLVNRVLFPYFGGFAKLVSAGVDFVRIDKVMEKFGWPMGPAYLMDVVGIDTGHHGRDVMAEGFPDRMKDERRSAVDALYEANRLGQKNGKGFYAYETDKRGKPKKVFDATVLDVLKPIVFEQREVTDEDIINWMMVPLCLETVRCLEDGIVETAAEADMGLVYGIGFPPFRGGALRYIDSIGVAEFVALADQYADLGPLYHPTAKLREMAKNGQRFFN.

The tract at residues 1–190 (MIYEGKAITV…KVGAVDAVVA (190 aa)) is enoyl-CoA hydratase/isomerase. Aspartate 297 serves as a coordination point for substrate. Positions 312–715 (HDVKQAAVLG…MAKNGQRFFN (404 aa)) are 3-hydroxyacyl-CoA dehydrogenase. NAD(+) contacts are provided by residues methionine 325, aspartate 344, 401–403 (VVE), lysine 408, and serine 430. Residue histidine 451 is the For 3-hydroxyacyl-CoA dehydrogenase activity of the active site. Position 454 (asparagine 454) interacts with NAD(+). The substrate site is built by asparagine 501 and tyrosine 660.

In the N-terminal section; belongs to the enoyl-CoA hydratase/isomerase family. The protein in the C-terminal section; belongs to the 3-hydroxyacyl-CoA dehydrogenase family. As to quaternary structure, heterotetramer of two alpha chains (FadB) and two beta chains (FadA).

It carries out the reaction a (3S)-3-hydroxyacyl-CoA + NAD(+) = a 3-oxoacyl-CoA + NADH + H(+). The enzyme catalyses a (3S)-3-hydroxyacyl-CoA = a (2E)-enoyl-CoA + H2O. The catalysed reaction is a 4-saturated-(3S)-3-hydroxyacyl-CoA = a (3E)-enoyl-CoA + H2O. It catalyses the reaction (3S)-3-hydroxybutanoyl-CoA = (3R)-3-hydroxybutanoyl-CoA. It carries out the reaction a (3Z)-enoyl-CoA = a 4-saturated (2E)-enoyl-CoA. The enzyme catalyses a (3E)-enoyl-CoA = a 4-saturated (2E)-enoyl-CoA. It functions in the pathway lipid metabolism; fatty acid beta-oxidation. Its function is as follows. Involved in the aerobic and anaerobic degradation of long-chain fatty acids via beta-oxidation cycle. Catalyzes the formation of 3-oxoacyl-CoA from enoyl-CoA via L-3-hydroxyacyl-CoA. It can also use D-3-hydroxyacyl-CoA and cis-3-enoyl-CoA as substrate. This Pseudomonas putida (strain GB-1) protein is Fatty acid oxidation complex subunit alpha.